The primary structure comprises 831 residues: AMP deaminase (831 aa).

3 disordered regions span residues 26–45 (NPGA…QDTP), 66–110 (NGTQ…KLLN), and 130–149 (NAVV…METT). Phosphoserine is present on residues Ser79 and Ser84. Zn(2+) is bound by residues His319 and His321. Residues His321 and 390-395 (KFNLKY) each bind substrate. Residue His587 participates in Zn(2+) binding. Position 590 (Glu590) interacts with substrate. The Proton acceptor role is filled by His609. Residue Asp664 coordinates Zn(2+). 665 to 668 (DPLQ) provides a ligand contact to substrate. Ser758, Ser776, Ser780, and Ser782 each carry phosphoserine.

It belongs to the metallo-dependent hydrolases superfamily. Adenosine and AMP deaminases family. In terms of assembly, homotetramer. The cofactor is Zn(2+).

It is found in the cytoplasm. It carries out the reaction AMP + H2O + H(+) = IMP + NH4(+). Its pathway is purine metabolism; IMP biosynthesis via salvage pathway; IMP from AMP: step 1/1. Functionally, AMP deaminase plays a critical role in energy metabolism. This Schizosaccharomyces pombe (strain 972 / ATCC 24843) (Fission yeast) protein is AMP deaminase (ada1).